A 437-amino-acid chain; its full sequence is Phosphomethylpyrimidine synthase (437 aa).

Residues Asn69, Met98, Tyr127, His163, 185–187 (SRG), 226–229 (DALR), and Glu265 contribute to the substrate site. Residue His269 participates in Zn(2+) binding. Tyr292 serves as a coordination point for substrate. Zn(2+) is bound at residue His333. Cys409, Cys412, and Cys416 together coordinate [4Fe-4S] cluster.

The protein belongs to the ThiC family. Requires [4Fe-4S] cluster as cofactor.

The catalysed reaction is 5-amino-1-(5-phospho-beta-D-ribosyl)imidazole + S-adenosyl-L-methionine = 4-amino-2-methyl-5-(phosphooxymethyl)pyrimidine + CO + 5'-deoxyadenosine + formate + L-methionine + 3 H(+). It participates in cofactor biosynthesis; thiamine diphosphate biosynthesis. Catalyzes the synthesis of the hydroxymethylpyrimidine phosphate (HMP-P) moiety of thiamine from aminoimidazole ribotide (AIR) in a radical S-adenosyl-L-methionine (SAM)-dependent reaction. This is Phosphomethylpyrimidine synthase from Alkaliphilus oremlandii (strain OhILAs) (Clostridium oremlandii (strain OhILAs)).